Reading from the N-terminus, the 205-residue chain is Probable GTP-binding protein EngB (205 aa).

In terms of domain architecture, EngB-type G spans 27–201 (TGIEIAFAGR…AVKLDFWFSP (175 aa)). GTP-binding positions include 35–42 (GRSNAGKS), 62–66 (GRTQL), 80–83 (DLPG), 147–150 (TKAD), and 180–182 (FSA). 2 residues coordinate Mg(2+): serine 42 and threonine 64.

Belongs to the TRAFAC class TrmE-Era-EngA-EngB-Septin-like GTPase superfamily. EngB GTPase family. The cofactor is Mg(2+).

Functionally, necessary for normal cell division and for the maintenance of normal septation. This is Probable GTP-binding protein EngB from Haemophilus influenzae (strain PittGG).